Consider the following 431-residue polypeptide: 4-hydroxy-3-methylbut-2-en-1-yl diphosphate synthase (flavodoxin) (431 aa).

Residues C310, C313, C356, and E363 each coordinate [4Fe-4S] cluster.

It belongs to the IspG family. Requires [4Fe-4S] cluster as cofactor.

The enzyme catalyses (2E)-4-hydroxy-3-methylbut-2-enyl diphosphate + oxidized [flavodoxin] + H2O + 2 H(+) = 2-C-methyl-D-erythritol 2,4-cyclic diphosphate + reduced [flavodoxin]. It functions in the pathway isoprenoid biosynthesis; isopentenyl diphosphate biosynthesis via DXP pathway; isopentenyl diphosphate from 1-deoxy-D-xylulose 5-phosphate: step 5/6. Converts 2C-methyl-D-erythritol 2,4-cyclodiphosphate (ME-2,4cPP) into 1-hydroxy-2-methyl-2-(E)-butenyl 4-diphosphate. This Rhodopseudomonas palustris (strain HaA2) protein is 4-hydroxy-3-methylbut-2-en-1-yl diphosphate synthase (flavodoxin).